Here is a 293-residue protein sequence, read N- to C-terminus: Bifunctional protein FolD (293 aa).

NADP(+)-binding positions include 164-166 (GRS), serine 193, and threonine 234.

The protein belongs to the tetrahydrofolate dehydrogenase/cyclohydrolase family. In terms of assembly, homodimer.

It catalyses the reaction (6R)-5,10-methylene-5,6,7,8-tetrahydrofolate + NADP(+) = (6R)-5,10-methenyltetrahydrofolate + NADPH. It carries out the reaction (6R)-5,10-methenyltetrahydrofolate + H2O = (6R)-10-formyltetrahydrofolate + H(+). The protein operates within one-carbon metabolism; tetrahydrofolate interconversion. In terms of biological role, catalyzes the oxidation of 5,10-methylenetetrahydrofolate to 5,10-methenyltetrahydrofolate and then the hydrolysis of 5,10-methenyltetrahydrofolate to 10-formyltetrahydrofolate. In Phocaeicola vulgatus (strain ATCC 8482 / DSM 1447 / JCM 5826 / CCUG 4940 / NBRC 14291 / NCTC 11154) (Bacteroides vulgatus), this protein is Bifunctional protein FolD.